The following is a 333-amino-acid chain: MELIVKEESKTDYNYGSDPYKRDIKTLLNTGLVVIDKPSGPTSHEVAAWVRNMLNLVKAGHGGTLDPKVTGALPVALGNTTKCVPIWHIPPKEYVCLMHLHDDAKLEDIENIFKEFTGRIHQRPPLKAAVKRSLRIRKIYEIEILEIDGRDILFRTKCQSGTYLRKLVDDMGEALGTSAHMQELRRTISGPFYENEAVYLQDLLDAYISWKEDGNEEELRKLVKPLEYGLQHLKKIIVKDSAVDAVCHGATLYSSGVSKIEKGIGTDEVVLIETLKGEAVAVGKPLMNTKDMLKTEEGEVVEITRVIMEPGIYPRIWKKRNKNDKSKPESKKN.

The active-site Nucleophile is the D66. A PUA domain is found at 233–308 (LKKIIVKDSA…EVVEITRVIM (76 aa)).

This sequence belongs to the pseudouridine synthase TruB family. Type 2 subfamily.

It carries out the reaction uridine(55) in tRNA = pseudouridine(55) in tRNA. Functionally, could be responsible for synthesis of pseudouridine from uracil-55 in the psi GC loop of transfer RNAs. This is Probable tRNA pseudouridine synthase B from Methanococcus maripaludis (strain C6 / ATCC BAA-1332).